We begin with the raw amino-acid sequence, 320 residues long: o-succinylbenzoate synthase (320 aa).

Lys-133 (proton donor) is an active-site residue. Mg(2+)-binding residues include Asp-161, Glu-190, and Asp-213. The active-site Proton acceptor is Lys-235.

The protein belongs to the mandelate racemase/muconate lactonizing enzyme family. MenC type 1 subfamily. A divalent metal cation is required as a cofactor.

It catalyses the reaction (1R,6R)-6-hydroxy-2-succinyl-cyclohexa-2,4-diene-1-carboxylate = 2-succinylbenzoate + H2O. The protein operates within quinol/quinone metabolism; 1,4-dihydroxy-2-naphthoate biosynthesis; 1,4-dihydroxy-2-naphthoate from chorismate: step 4/7. It functions in the pathway quinol/quinone metabolism; menaquinone biosynthesis. Its function is as follows. Converts 2-succinyl-6-hydroxy-2,4-cyclohexadiene-1-carboxylate (SHCHC) to 2-succinylbenzoate (OSB). The chain is o-succinylbenzoate synthase from Shigella flexneri.